A 303-amino-acid polypeptide reads, in one-letter code: Protoheme IX farnesyltransferase (303 aa).

The next 6 helical transmembrane spans lie at 25–45 (MGLVQGNLIPAFAGAWLAIVM), 54–74 (IPQILLMLVGSTLIMGGACAL), 118–138 (CLFLLNIPSGVLGLIGIVGYV), 166–186 (IGWVAIDGSLSLAAVALFLVV), 230–250 (LVLLLPLPFLLSNLGVTFVVI), and 280–300 (FVYSLNYLVVFFALVVVVSLI).

It belongs to the UbiA prenyltransferase family. Protoheme IX farnesyltransferase subfamily. In terms of assembly, interacts with CtaA.

The protein localises to the cell membrane. The catalysed reaction is heme b + (2E,6E)-farnesyl diphosphate + H2O = Fe(II)-heme o + diphosphate. It participates in porphyrin-containing compound metabolism; heme O biosynthesis; heme O from protoheme: step 1/1. Functionally, converts heme B (protoheme IX) to heme O by substitution of the vinyl group on carbon 2 of heme B porphyrin ring with a hydroxyethyl farnesyl side group. The protein is Protoheme IX farnesyltransferase of Staphylococcus epidermidis (strain ATCC 12228 / FDA PCI 1200).